Consider the following 195-residue polypeptide: Probable DNA-directed RNA polymerase subunit delta (195 aa).

One can recognise an HTH HARE-type domain in the interval 14-83 (LSMIEVARAI…GDNKWGLRSW (70 aa)). Composition is skewed to acidic residues over residues 120–138 (DSDAIDYNADDPEDEDAYE) and 145–195 (YDDE…TSEE). The disordered stretch occupies residues 120 to 195 (DSDAIDYNAD…SDDDAETSEE (76 aa)).

This sequence belongs to the RpoE family. RNAP is composed of a core of 2 alpha, a beta and a beta' subunits. The core is associated with a delta subunit and one of several sigma factors.

Participates in both the initiation and recycling phases of transcription. In the presence of the delta subunit, RNAP displays an increased specificity of transcription, a decreased affinity for nucleic acids, and an increased efficiency of RNA synthesis because of enhanced recycling. This Streptococcus pneumoniae serotype 2 (strain D39 / NCTC 7466) protein is Probable DNA-directed RNA polymerase subunit delta.